Here is a 225-residue protein sequence, read N- to C-terminus: Jeltraxin (225 aa).

A signal peptide spans 1–19 (MKGLVIFFCLFYGCHVAGA). Residues 21 to 223 (GKTIMLFPQK…IVVLRNQFIP (203 aa)) form the Pentraxin (PTX) domain. Cysteine 51 and cysteine 112 are oxidised to a cystine. Ca(2+)-binding residues include aspartate 75 and asparagine 76. Asparagine 87 is a glycosylation site (N-linked (GlcNAc...) asparagine). Ca(2+) is bound by residues glutamate 153, glutamine 154, aspartate 155, and glutamine 165. The N-linked (GlcNAc...) asparagine glycan is linked to asparagine 207.

In terms of assembly, homodecamer consisting of two homopentamer units. Pentraxin (or pentaxin) have a discoid arrangement of 5 non-covalently bound subunits. Ca(2+) is required as a cofactor. In terms of processing, glycosylated. As to expression, oviduct. Highest expression levels were detected in the pars convoluta with lower levels detected in the pars recta. No expression was detected in the pars uterina.

The protein resides in the secreted. Functionally, calcium-dependent beta-galactose specific lectin. This is Jeltraxin from Lepidobatrachus laevis (Budgett's frog).